Reading from the N-terminus, the 142-residue chain is Transcriptional regulator MraZ (142 aa).

SpoVT-AbrB domains follow at residues 5–47 and 76–119; these read THSP…SERE and ASDE…DAQA.

It belongs to the MraZ family. In terms of assembly, forms oligomers.

Its subcellular location is the cytoplasm. The protein localises to the nucleoid. This is Transcriptional regulator MraZ from Arthrobacter sp. (strain FB24).